Consider the following 560-residue polypeptide: Leucine-rich repeat and IQ domain-containing protein 4 (560 aa).

The interval 1–20 (MSKDIKSVEHSPKIHQRNDP) is disordered. LRR repeat units lie at residues 23–47 (VNDR…IFTF), 48–70 (TELE…IQRL), 72–95 (NIRV…LLSS), 97–116 (ESLD…VVSF), 117–140 (LHAL…IFKN), 141–164 (LHHL…IVNQ), 166–187 (KLRE…LCVL), 188–210 (YTLE…IGHL), 212–233 (GLQK…LCQC), 234–256 (SQLS…FAEL), 258–281 (KMTE…RWTS), 283–301 (HLLY…SFRC), 302–325 (LVNL…ICAL), 326–348 (KNLE…LGSL), 350–371 (KLKI…VLSL), 374–397 (LEKL…IRKL), 398–422 (QSLK…SMPN), 424–443 (EVLD…ICQA), 444–466 (QALK…LDSL), and 468–489 (NLKV…VCAE). An IQ domain is found at 504–533 (RNIMATKIQAWWRGTMVQRGFGKFGELLKP). The tract at residues 529–560 (ELLKPQKKGKTSPKDKKGKKDVKGKPGKGKKK) is disordered. A compositionally biased stretch (basic residues) spans 533–560 (PQKKGKTSPKDKKGKKDVKGKPGKGKKK).

This Homo sapiens (Human) protein is Leucine-rich repeat and IQ domain-containing protein 4 (LRRIQ4).